We begin with the raw amino-acid sequence, 288 residues long: N-acetylneuraminate lyase (288 aa).

Aceneuramate-binding residues include serine 44 and threonine 45. Tyrosine 133 (proton donor) is an active-site residue. Residue lysine 161 is the Schiff-base intermediate with substrate of the active site. 5 residues coordinate aceneuramate: threonine 163, glycine 185, aspartate 187, glutamate 188, and serine 204.

The protein belongs to the DapA family. NanA subfamily. As to quaternary structure, homotetramer.

The protein localises to the cytoplasm. The enzyme catalyses aceneuramate = aldehydo-N-acetyl-D-mannosamine + pyruvate. It participates in amino-sugar metabolism; N-acetylneuraminate degradation; D-fructose 6-phosphate from N-acetylneuraminate: step 1/5. Functionally, catalyzes the reversible aldol cleavage of N-acetylneuraminic acid (sialic acid; Neu5Ac) to form pyruvate and N-acetylmannosamine (ManNAc) via a Schiff base intermediate. This Clostridium perfringens (strain ATCC 13124 / DSM 756 / JCM 1290 / NCIMB 6125 / NCTC 8237 / Type A) protein is N-acetylneuraminate lyase.